We begin with the raw amino-acid sequence, 97 residues long: Exodeoxyribonuclease 7 small subunit (97 aa).

The segment at 1–22 is disordered; sequence MAKTASPGATPPGNGTEPLPDN.

The protein belongs to the XseB family. In terms of assembly, heterooligomer composed of large and small subunits.

It is found in the cytoplasm. It carries out the reaction Exonucleolytic cleavage in either 5'- to 3'- or 3'- to 5'-direction to yield nucleoside 5'-phosphates.. In terms of biological role, bidirectionally degrades single-stranded DNA into large acid-insoluble oligonucleotides, which are then degraded further into small acid-soluble oligonucleotides. The sequence is that of Exodeoxyribonuclease 7 small subunit from Burkholderia cenocepacia (strain HI2424).